A 929-amino-acid polypeptide reads, in one-letter code: SCY1-like protein 2 (929 aa).

The 296-residue stretch at 32-327 folds into the Protein kinase domain; the sequence is FDVGRHIASG…ADQMTKIPFF (296 aa). One copy of the HEAT repeat lies at 443 to 479; sequence DEIKNSVLPMVYRALEAPSIQIQELCLNIIPTFANLI. The stretch at 661–701 forms a coiled coil; sequence ESENKEDGLQNKHKRASLTLEEKQKLAKEQEQAQKLKSQQP. At S677 the chain carries Phosphoserine. Over residues 684–694 the composition is skewed to basic and acidic residues; that stretch reads QKLAKEQEQAQ. Disordered stretches follow at residues 684–709 and 906–929; these read QKLA…VHTP and NFAQ…DLFG. Over residues 695–705 the composition is skewed to low complexity; sequence KLKSQQPLKPQ. A necessary for interaction with AP2 complex and clathrin, interaction with clathrin is necessary for its targeting to the TGN and endosomal membranes region spans residues 699-929; the sequence is QQPLKPQVHT…ASNDLKDLFG (231 aa). Residue T708 is modified to Phosphothreonine. Over residues 912–922 the composition is skewed to polar residues; that stretch reads TTMTNSSSASN.

Belongs to the protein kinase superfamily. In terms of assembly, interacts with clathrin and AP2B1; the interaction mediates the association with the AP-2 complex. Post-translationally, could autophosphorylate in presence of poly-L-lysine.

Its subcellular location is the cytoplasmic vesicle. It is found in the clathrin-coated vesicle. The protein resides in the golgi apparatus. The protein localises to the trans-Golgi network membrane. It localises to the endosome membrane. Functionally, component of the AP2-containing clathrin coat that may regulate clathrin-dependent trafficking at plasma membrane, TGN and endosomal system. A possible serine/threonine-protein kinase toward the beta2-subunit of the plasma membrane adapter complex AP2 and other proteins in presence of poly-L-lysine has not been confirmed. By regulating the expression of excitatory receptors at synapses, plays an essential role in neuronal function and signaling and in brain development. This chain is SCY1-like protein 2, found in Homo sapiens (Human).